A 427-amino-acid chain; its full sequence is Adenylosuccinate synthetase (427 aa).

GTP-binding positions include 12 to 18 and 40 to 42; these read GDEGKGK and GHT. Asp-13 acts as the Proton acceptor in catalysis. Positions 13 and 40 each coordinate Mg(2+). IMP is bound by residues 13-16, 38-41, Thr-128, Arg-142, Gln-223, Thr-238, and Arg-302; these read DEGK and NAGH. The active-site Proton donor is His-41. Position 298–304 (298–304) interacts with substrate; sequence TTTGRPR. Residues Arg-304, 330 to 332, and 412 to 414 contribute to the GTP site; these read KLD and GVG.

It belongs to the adenylosuccinate synthetase family. Homodimer. It depends on Mg(2+) as a cofactor.

The protein resides in the cytoplasm. The catalysed reaction is IMP + L-aspartate + GTP = N(6)-(1,2-dicarboxyethyl)-AMP + GDP + phosphate + 2 H(+). Its pathway is purine metabolism; AMP biosynthesis via de novo pathway; AMP from IMP: step 1/2. In terms of biological role, plays an important role in the de novo pathway of purine nucleotide biosynthesis. Catalyzes the first committed step in the biosynthesis of AMP from IMP. This chain is Adenylosuccinate synthetase, found in Pelotomaculum thermopropionicum (strain DSM 13744 / JCM 10971 / SI).